The sequence spans 98 residues: Large ribosomal subunit protein uL23 (98 aa).

The protein belongs to the universal ribosomal protein uL23 family. Part of the 50S ribosomal subunit. Contacts protein L29, and trigger factor when it is bound to the ribosome.

In terms of biological role, one of the early assembly proteins it binds 23S rRNA. One of the proteins that surrounds the polypeptide exit tunnel on the outside of the ribosome. Forms the main docking site for trigger factor binding to the ribosome. The sequence is that of Large ribosomal subunit protein uL23 from Chromohalobacter salexigens (strain ATCC BAA-138 / DSM 3043 / CIP 106854 / NCIMB 13768 / 1H11).